Here is a 500-residue protein sequence, read N- to C-terminus: Probable malate:quinone oxidoreductase (500 aa).

This sequence belongs to the MQO family. FAD is required as a cofactor.

The enzyme catalyses (S)-malate + a quinone = a quinol + oxaloacetate. It participates in carbohydrate metabolism; tricarboxylic acid cycle; oxaloacetate from (S)-malate (quinone route): step 1/1. The sequence is that of Probable malate:quinone oxidoreductase from Bacillus cereus (strain ZK / E33L).